Consider the following 225-residue polypeptide: Large ribosomal subunit protein bL25 (225 aa).

Residues 206–225 (EDSKNKITKDNETNKDKSNL) are disordered.

Belongs to the bacterial ribosomal protein bL25 family. CTC subfamily. Part of the 50S ribosomal subunit; part of the 5S rRNA/L5/L18/L25 subcomplex. Contacts the 5S rRNA. Binds to the 5S rRNA independently of L5 and L18.

In terms of biological role, this is one of the proteins that binds to the 5S RNA in the ribosome where it forms part of the central protuberance. In Vesicomyosocius okutanii subsp. Calyptogena okutanii (strain HA), this protein is Large ribosomal subunit protein bL25.